The sequence spans 71 residues: SRY-related protein LG28 (71 aa).

Residues 1–68 (VKRPMNAFMV…KHMADYPDYK (68 aa)) constitute a DNA-binding region (HMG box).

The protein localises to the nucleus. The sequence is that of SRY-related protein LG28 from Eublepharis macularius (Leopard gecko).